Here is a 568-residue protein sequence, read N- to C-terminus: Keratin, type I cytoskeletal 10 (568 aa).

Residues 1 to 15 (MSVRYSSSKQYSSSR) are compositionally biased toward low complexity. Residues 1–31 (MSVRYSSSKQYSSSRSGGGGGGGGGSSFRIS) form a disordered region. Residues 1 to 135 (MSVRYSSSKQ…GGDGGLLSGN (135 aa)) are head. A phosphoserine mark is found at Ser-14, Ser-16, Ser-36, Ser-47, Ser-50, and Ser-160. Positions 16–26 (SGGGGGGGGGS) are enriched in gly residues. Positions 136–171 (EKVTMQNLNDRLASYLDKVRALEESNYELEGKIKEW) are coil 1A. Positions 136-450 (EKVTMQNLND…SLLEGEGSSG (315 aa)) constitute an IF rod domain. The tract at residues 172–192 (YEKHGNSSQRAPRDYSKYYQT) is linker 1. Positions 193 to 284 (IEDLKNQILN…KNHEEEMRDL (92 aa)) are coil 1B. The interval 285-307 (QNVSTGDVNVEMNAAPGVDLTEL) is linker 12. The interval 308–446 (LNNMRNQYEQ…QTYRSLLEGE (139 aa)) is coil 2. Positions 447 to 568 (GSSGGGGYGG…GESSSKGPRY (122 aa)) are tail. Gly residues predominate over residues 485–546 (GGGSSGGGGH…GGGYGGGSSS (62 aa)). A disordered region spans residues 485-568 (GGGSSGGGGH…GESSSKGPRY (84 aa)). A compositionally biased stretch (low complexity) spans 547–568 (SGGHKSSSSGSVGESSSKGPRY).

It belongs to the intermediate filament family. As to quaternary structure, heterotetramer of two type I and two type II keratins. Heterodimer with KRT1. Two heterodimers of KRT1 and KRT10 form a heterotetramer. The KRT10 subunit in the heterotetramer is probably disulfide-linked. As to expression, expressed in skin.

It is found in the secreted. It localises to the extracellular space. Its subcellular location is the cell surface. The protein localises to the cytoplasm. Its function is as follows. Plays a role in the establishment of the epidermal barrier on plantar skin. Involved in the maintenance of cell layer development and keratin filament bundles in suprabasal cells of the epithelium. The protein is Keratin, type I cytoskeletal 10 of Canis lupus familiaris (Dog).